The sequence spans 878 residues: DNA mismatch repair protein MutS (878 aa).

Position 626 to 633 (626 to 633 (GPNMAGKS)) interacts with ATP.

The protein belongs to the DNA mismatch repair MutS family.

Functionally, this protein is involved in the repair of mismatches in DNA. It is possible that it carries out the mismatch recognition step. This protein has a weak ATPase activity. The polypeptide is DNA mismatch repair protein MutS (Paracoccus denitrificans (strain Pd 1222)).